A 620-amino-acid chain; its full sequence is Estrogen receptor (620 aa).

Composition is skewed to polar residues over residues 1 to 10 (MSKRQSSVQI) and 101 to 111 (GSLQSLGSGPT). 2 disordered regions span residues 1–55 (MSKR…RGSG) and 88–111 (YSAPLETNGPPSEGSLQSLGSGPT). The tract at residues 1–185 (MSKRQSSVQI…GFEMAKDTRF (185 aa)) is modulating. 2 NR C4-type zinc fingers span residues 186-206 (CAVCSDYASGYHYGVWSCEGC) and 222-246 (CPATNQCTIDRNRRKSCQACRLRKC). Residues 186–251 (CAVCSDYASG…RLRKCYEVGM (66 aa)) constitute a DNA-binding region (nuclear receptor). The tract at residues 252–314 (MKGGVRKDRI…GGGRLSVTSI (63 aa)) is hinge. The segment at 286–308 (KTVHYDGRKRSSTGGGGGGGGGR) is disordered. Residues 298–308 (TGGGGGGGGGR) are compositionally biased toward gly residues. The 237-residue stretch at 315–551 (PPEQVLLLLQ…DLLLEMLDAH (237 aa)) folds into the NR LBD domain. The disordered stretch occupies residues 558 to 620 (RAPQSLSQVD…RPDCTPALQD (63 aa)).

This sequence belongs to the nuclear hormone receptor family. NR3 subfamily. In terms of assembly, binds DNA as a homodimer. Can form a heterodimer with ER-beta. As to expression, widely expressed in brain, ovary, testis, and female liver.

It localises to the nucleus. Its function is as follows. The steroid hormones and their receptors are involved in the regulation of eukaryotic gene expression and affect cellular proliferation and differentiation in target tissues. The chain is Estrogen receptor (esr1) from Oryzias latipes (Japanese rice fish).